Consider the following 169-residue polypeptide: Spore protein SP21 (169 aa).

2 disordered regions span residues 1–21 (MADLSVRRGTGSTPQRTREWD) and 150–169 (QPKRIQVASSGTEQKEHIKA). Residues 47-159 (QGPPAFVPAF…QPKRIQVASS (113 aa)) form the sHSP domain.

This sequence belongs to the small heat shock protein (HSP20) family.

Functionally, may stabilize cellular components during stress and spore formation. The sequence is that of Spore protein SP21 (hspA) from Stigmatella aurantiaca (strain DW4/3-1).